The primary structure comprises 241 residues: Small ribosomal subunit protein uS2 (241 aa).

This sequence belongs to the universal ribosomal protein uS2 family.

The chain is Small ribosomal subunit protein uS2 from Erwinia tasmaniensis (strain DSM 17950 / CFBP 7177 / CIP 109463 / NCPPB 4357 / Et1/99).